Consider the following 1275-residue polypeptide: Inner capsid protein lambda-1 (1275 aa).

Residues 1-12 are compositionally biased toward basic residues; it reads MKRIPRKTKGKS. The segment at 1 to 149 is disordered; sequence MKRIPRKTKG…DNEGGSNQKP (149 aa). 2 stretches are compositionally biased toward basic and acidic residues: residues 18-35 and 75-117; these read DSTE…DKQN and NNDE…DKSK. The span at 118–149 shows a compositional bias: polar residues; the sequence is AQVTYSDTGINNANELSRSGNVDNEGGSNQKP. Residues 181-203 form a C2H2-type zinc finger; that stretch reads YQCHVCSAVLFSPLDLDAHVASH.

This sequence belongs to the turreted BTV-fold inner capsid family. As to quaternary structure, homodecamer; each decamer is made up of two conformers of VP2, called VP2A and VP2B. 12 homodecamers assemble to form an icosahedral capsid. Interacts with protein mu-NS; in viral inclusions. It depends on Mg(2+) as a cofactor. Mn(2+) is required as a cofactor.

It localises to the virion. The catalysed reaction is ATP + H2O = ADP + phosphate + H(+). Its function is as follows. Inner capsid protein that self-assembles to form an icosahedral capsid with a T=2 symmetry, which consists of 120 copies of VP2, with channels at each of its five-fold vertices. This capsid constitutes the innermost concentric layer of the viral mature particle. Functionally, displays NTPase, RNA 5'-triphosphatase (RTPase) and RNA helicase activities and probably participates in transcription of the viral genome. Helicase activity might be involved in unwinding or reannealing dsRNA during RNA synthesis. RTPase enzymatic activity represents the first step in RNA capping, which yields a 5'-diphosphorylated plus-strand RNA. This chain is Inner capsid protein lambda-1 (L3), found in Reovirus type 1 (strain Lang) (T1L).